A 282-amino-acid polypeptide reads, in one-letter code: MGIKKFKPTTNARRGMTQLDYSEITKKSPEKSLLESQSHTAGRNNYGRMTVRHRGGGNKRQYRIIDFKRIKDDVPATVKAIEYDPNRTANIALLVYADGVKSYIIAPKGLKVGDKVQSGSEADIKVGNALPLKDIPVGTVIHNIELKPGKGGQLVRSAGASAQLLGKEGKYVLIRLASSEVRMVLATNRATIGAVGNEEHELVNVGKAGRTRYAGQRPHVRGSVMNPNDHPHGGGEGKAPIGRPSPLSPWGKKTIGKKTRNKHNKSNKFIVRGRKRGRLGNI.

Disordered regions lie at residues 26–55 and 218–266; these read KKSP…RHRG and PHVR…HNKS. Residues 34–43 are compositionally biased toward polar residues; the sequence is LESQSHTAGR. Residues 254 to 266 are compositionally biased toward basic residues; the sequence is TIGKKTRNKHNKS.

Belongs to the universal ribosomal protein uL2 family. As to quaternary structure, part of the 50S ribosomal subunit. Forms a bridge to the 30S subunit in the 70S ribosome.

Its function is as follows. One of the primary rRNA binding proteins. Required for association of the 30S and 50S subunits to form the 70S ribosome, for tRNA binding and peptide bond formation. It has been suggested to have peptidyltransferase activity; this is somewhat controversial. Makes several contacts with the 16S rRNA in the 70S ribosome. In Pediococcus pentosaceus (strain ATCC 25745 / CCUG 21536 / LMG 10740 / 183-1w), this protein is Large ribosomal subunit protein uL2.